We begin with the raw amino-acid sequence, 389 residues long: MSKTAYVRTKPHLNIGTMGHVDHGKTTLTAAITKVLAERGSGTFVPFDRIDRAPEEAARGITINIAHVEYETDTRHYAHVDMPGHADYVKNMVTGAAQLDGAILVVSALDGIMPQTAEHVLLARQVGVDHIVVALNKADAGDEELTDLVELEVRDLLSEHGYGGDGAPVVRVSGLKALEGDPKWTASIEALLDAVDTYVPMPERYVDAPFLLPVENVLTITGRGTVVTGAVERGTVRVGNRVEVLGAGLETVVTGLETFGKPMDEAQAGDNVALLLRGVPRDAVRRGHVVAAPGSVVPRSRFSAQVYVLSAREGGRTTPVTSGYRPQFYIRTADVVGDVDLGEVGVARPGETVSMIVELGREVPLEPGLGFAIREGGRTVGAGTVTALV.

The tr-type G domain occupies 10-203 (KPHLNIGTMG…AVDTYVPMPE (194 aa)). The interval 19–26 (GHVDHGKT) is G1. 19–26 (GHVDHGKT) contributes to the GTP binding site. Residue T26 participates in Mg(2+) binding. The interval 60 to 64 (GITIN) is G2. The tract at residues 81-84 (DMPG) is G3. Residues 81-85 (DMPGH) and 136-139 (NKAD) contribute to the GTP site. Residues 136-139 (NKAD) are G4. Positions 173-175 (SGL) are G5.

The protein belongs to the TRAFAC class translation factor GTPase superfamily. Classic translation factor GTPase family. EF-Tu/EF-1A subfamily. Monomer.

The protein localises to the cytoplasm. It catalyses the reaction GTP + H2O = GDP + phosphate + H(+). Its function is as follows. GTP hydrolase that promotes the GTP-dependent binding of aminoacyl-tRNA to the A-site of ribosomes during protein biosynthesis. The sequence is that of Elongation factor Tu-3 from Streptomyces ramocissimus.